Reading from the N-terminus, the 192-residue chain is Glycerol-3-phosphate acyltransferase (192 aa).

5 helical membrane-spanning segments follow: residues 4–24 (MFWL…AILL), 54–74 (LAIL…LIAS), 80–100 (IAQQ…PVYF), 112–132 (AGVL…AWLL), and 154–174 (LLAW…LLIV).

Belongs to the PlsY family. Probably interacts with PlsX.

It is found in the cell inner membrane. The catalysed reaction is an acyl phosphate + sn-glycerol 3-phosphate = a 1-acyl-sn-glycero-3-phosphate + phosphate. It functions in the pathway lipid metabolism; phospholipid metabolism. In terms of biological role, catalyzes the transfer of an acyl group from acyl-phosphate (acyl-PO(4)) to glycerol-3-phosphate (G3P) to form lysophosphatidic acid (LPA). This enzyme utilizes acyl-phosphate as fatty acyl donor, but not acyl-CoA or acyl-ACP. The chain is Glycerol-3-phosphate acyltransferase from Pseudomonas savastanoi pv. phaseolicola (strain 1448A / Race 6) (Pseudomonas syringae pv. phaseolicola (strain 1448A / Race 6)).